The sequence spans 907 residues: Phototropin-2 (907 aa).

The interval 28–84 (ATAGLEIVAEDAPSGSSGAHQQQAWRPVAPATAGRDSGGTGSGKSSVDGGVGRASHD) is disordered. Polar residues predominate over residues 41-51 (SGSSGAHQQQA). In terms of domain architecture, PAS 1 spans 89-162 (VSQELKDALS…AKIRDAVKHG (74 aa)). FMN is bound by residues 138–143 (NCRFLQ), R156, N171, N181, and Q202. At C139 the chain carries S-4a-FMN cysteine. The PAC 1 domain maps to 163–217 (RSFCGRLLNYRKDGAPFWNLLTVTPIRDDNGKVIKFIGMQVEVSKYTEGLSDKRM). Residues 332-363 (RSSVGSREAPAVVEEPAPAPPPAPEVVERTDS) are disordered. Residues 375–448 (QGIDLATTLE…DKIREAIREQ (74 aa)) enclose the PAS 2 domain. FMN contacts are provided by residues 424-429 (NCRFLQ), R442, N457, N467, and Q488. Position 425 is an S-4a-FMN cysteine (C425). The PAC 2 domain occupies 449 to 503 (KEITVQLINYTKSGKKFWNLFHLQPMRDQKGELQYFIGVQLDGSDHVEPLRNRLS). The 288-residue stretch at 576–863 (FKPVKPLGCG…ANDIKQHSFF (288 aa)) folds into the Protein kinase domain. Residues 582–590 (LGCGDTGSV) and K605 contribute to the ATP site. Catalysis depends on D701, which acts as the Proton acceptor.

This sequence belongs to the protein kinase superfamily. Ser/Thr protein kinase family. As to quaternary structure, homodimer. Requires FMN as cofactor. Post-translationally, autophosphorylated in response to blue light irradiation. 2 molecules of FMN bind covalently to cysteines after exposure to blue light and are reversed in the dark. Expressed at low levels in leaves of dark-grown seedlings.

The catalysed reaction is L-seryl-[protein] + ATP = O-phospho-L-seryl-[protein] + ADP + H(+). It catalyses the reaction L-threonyl-[protein] + ATP = O-phospho-L-threonyl-[protein] + ADP + H(+). In terms of biological role, protein kinase that acts as a blue light photoreceptor in a signal-transduction pathway for phototropic responses. Regulates a wide range of physiological activities in plants that maximize the efficiency of photosynthesis, such as chloroplast relocations, stomata opening, and leaf expansion. The chain is Phototropin-2 (PHOT2) from Oryza sativa subsp. japonica (Rice).